The sequence spans 206 residues: Small ribosomal subunit protein uS4 (206 aa).

The region spanning 96 to 156 is the S4 RNA-binding domain; that stretch reads GRLDNVVYRM…EKAKKQARIK (61 aa).

It belongs to the universal ribosomal protein uS4 family. Part of the 30S ribosomal subunit. Contacts protein S5. The interaction surface between S4 and S5 is involved in control of translational fidelity.

One of the primary rRNA binding proteins, it binds directly to 16S rRNA where it nucleates assembly of the body of the 30S subunit. Its function is as follows. With S5 and S12 plays an important role in translational accuracy. The polypeptide is Small ribosomal subunit protein uS4 (Aeromonas hydrophila subsp. hydrophila (strain ATCC 7966 / DSM 30187 / BCRC 13018 / CCUG 14551 / JCM 1027 / KCTC 2358 / NCIMB 9240 / NCTC 8049)).